The primary structure comprises 317 residues: Ribosomal protein L11 methyltransferase (317 aa).

S-adenosyl-L-methionine contacts are provided by T158, G179, D201, and N244.

Belongs to the methyltransferase superfamily. PrmA family.

The protein resides in the cytoplasm. The enzyme catalyses L-lysyl-[protein] + 3 S-adenosyl-L-methionine = N(6),N(6),N(6)-trimethyl-L-lysyl-[protein] + 3 S-adenosyl-L-homocysteine + 3 H(+). Methylates ribosomal protein L11. The chain is Ribosomal protein L11 methyltransferase from Streptococcus equi subsp. equi (strain 4047).